The sequence spans 252 residues: Type III pantothenate kinase (252 aa).

6-13 (DIGNTSTA) serves as a coordination point for ATP. 104–107 (GADR) is a binding site for substrate. Asp-106 (proton acceptor) is an active-site residue. Position 128 (Asp-128) interacts with K(+). ATP is bound at residue Thr-131. Thr-183 is a substrate binding site.

It belongs to the type III pantothenate kinase family. As to quaternary structure, homodimer. It depends on NH4(+) as a cofactor. K(+) serves as cofactor.

The protein localises to the cytoplasm. The enzyme catalyses (R)-pantothenate + ATP = (R)-4'-phosphopantothenate + ADP + H(+). The protein operates within cofactor biosynthesis; coenzyme A biosynthesis; CoA from (R)-pantothenate: step 1/5. Functionally, catalyzes the phosphorylation of pantothenate (Pan), the first step in CoA biosynthesis. The chain is Type III pantothenate kinase from Thermus thermophilus (strain ATCC BAA-163 / DSM 7039 / HB27).